A 106-amino-acid polypeptide reads, in one-letter code: Small ribosomal subunit protein bS16 (106 aa).

This sequence belongs to the bacterial ribosomal protein bS16 family.

This chain is Small ribosomal subunit protein bS16, found in Protochlamydia amoebophila (strain UWE25).